Reading from the N-terminus, the 64-residue chain is U2-aranetoxin-Av1a (64 aa).

In terms of tissue distribution, expressed in fat body, but not in cephalothorax, silk gland, midgut.

Insecticidal toxin. In Araneus ventricosus (Orbweaver spider), this protein is U2-aranetoxin-Av1a.